The primary structure comprises 254 residues: Imidazole glycerol phosphate synthase subunit HisF (254 aa).

Active-site residues include D11 and D130.

It belongs to the HisA/HisF family. As to quaternary structure, heterodimer of HisH and HisF.

The protein resides in the cytoplasm. The enzyme catalyses 5-[(5-phospho-1-deoxy-D-ribulos-1-ylimino)methylamino]-1-(5-phospho-beta-D-ribosyl)imidazole-4-carboxamide + L-glutamine = D-erythro-1-(imidazol-4-yl)glycerol 3-phosphate + 5-amino-1-(5-phospho-beta-D-ribosyl)imidazole-4-carboxamide + L-glutamate + H(+). It participates in amino-acid biosynthesis; L-histidine biosynthesis; L-histidine from 5-phospho-alpha-D-ribose 1-diphosphate: step 5/9. In terms of biological role, IGPS catalyzes the conversion of PRFAR and glutamine to IGP, AICAR and glutamate. The HisF subunit catalyzes the cyclization activity that produces IGP and AICAR from PRFAR using the ammonia provided by the HisH subunit. The protein is Imidazole glycerol phosphate synthase subunit HisF of Trichlorobacter lovleyi (strain ATCC BAA-1151 / DSM 17278 / SZ) (Geobacter lovleyi).